A 233-amino-acid chain; its full sequence is Large ribosomal subunit protein uL1 (233 aa).

Belongs to the universal ribosomal protein uL1 family. Part of the 50S ribosomal subunit.

In terms of biological role, binds directly to 23S rRNA. The L1 stalk is quite mobile in the ribosome, and is involved in E site tRNA release. Its function is as follows. Protein L1 is also a translational repressor protein, it controls the translation of the L11 operon by binding to its mRNA. This is Large ribosomal subunit protein uL1 from Pseudoalteromonas atlantica (strain T6c / ATCC BAA-1087).